A 116-amino-acid polypeptide reads, in one-letter code: MPNVQKTVVKKSHKFVIDCTAPAGKIVDVAAFEKYLHDRIKVDNKVSNLGSNVVISKDKSKIIINTTIPFSKRYLKYLTKKFLKFKQIRDFLRVVATTKNTYELRYFNIGDSESQE.

Belongs to the eukaryotic ribosomal protein eL22 family.

The sequence is that of Large ribosomal subunit protein eL22B (rpl22a) from Dictyostelium discoideum (Social amoeba).